A 109-amino-acid polypeptide reads, in one-letter code: Putative pterin-4-alpha-carbinolamine dehydratase (109 aa).

It belongs to the pterin-4-alpha-carbinolamine dehydratase family.

The enzyme catalyses (4aS,6R)-4a-hydroxy-L-erythro-5,6,7,8-tetrahydrobiopterin = (6R)-L-erythro-6,7-dihydrobiopterin + H2O. The sequence is that of Putative pterin-4-alpha-carbinolamine dehydratase from Halorhodospira halophila (strain DSM 244 / SL1) (Ectothiorhodospira halophila (strain DSM 244 / SL1)).